Consider the following 156-residue polypeptide: Ribosomal RNA large subunit methyltransferase H (156 aa).

S-adenosyl-L-methionine contacts are provided by residues leucine 73, glycine 104, and 123-128; that span reads LSPLTL.

The protein belongs to the RNA methyltransferase RlmH family. In terms of assembly, homodimer.

The protein localises to the cytoplasm. It carries out the reaction pseudouridine(1915) in 23S rRNA + S-adenosyl-L-methionine = N(3)-methylpseudouridine(1915) in 23S rRNA + S-adenosyl-L-homocysteine + H(+). Specifically methylates the pseudouridine at position 1915 (m3Psi1915) in 23S rRNA. This chain is Ribosomal RNA large subunit methyltransferase H, found in Serratia proteamaculans (strain 568).